The primary structure comprises 312 residues: R2-like ligand binding oxidase (312 aa).

Residues glutamate 68, glutamate 101, and histidine 104 each coordinate Mn(2+). A cross-link (3-(O4'-tyrosyl)-valine (Val-Tyr)) is located at residues 71-162 (VTQDIQPFMA…AAQVRASATY (92 aa)). Glutamate 101 is a binding site for Fe cation. Residues glutamate 167, glutamate 202, and histidine 205 each contribute to the Fe cation site.

Belongs to the ribonucleoside diphosphate reductase small chain family. R2-like ligand binding oxidase subfamily. As to quaternary structure, homodimer. Fe cation serves as cofactor. It depends on Mn(2+) as a cofactor.

Probable oxidase that might be involved in lipid metabolism. The chain is R2-like ligand binding oxidase from Mycobacterium sp. (strain KMS).